A 402-amino-acid chain; its full sequence is Phosphoglycerate kinase (402 aa).

Substrate-binding positions include 24-26, arginine 40, 63-66, arginine 122, and arginine 155; these read DFN and HFGR. ATP contacts are provided by residues lysine 206, glycine 297, glutamate 328, and 358-361; that span reads GGDS.

The protein belongs to the phosphoglycerate kinase family. As to quaternary structure, monomer.

The protein localises to the cytoplasm. The catalysed reaction is (2R)-3-phosphoglycerate + ATP = (2R)-3-phospho-glyceroyl phosphate + ADP. Its pathway is carbohydrate degradation; glycolysis; pyruvate from D-glyceraldehyde 3-phosphate: step 2/5. The protein is Phosphoglycerate kinase of Prochlorococcus marinus (strain MIT 9515).